We begin with the raw amino-acid sequence, 175 residues long: Adenine phosphoribosyltransferase (175 aa).

This sequence belongs to the purine/pyrimidine phosphoribosyltransferase family. Homodimer.

It localises to the cytoplasm. The catalysed reaction is AMP + diphosphate = 5-phospho-alpha-D-ribose 1-diphosphate + adenine. It functions in the pathway purine metabolism; AMP biosynthesis via salvage pathway; AMP from adenine: step 1/1. Its function is as follows. Catalyzes a salvage reaction resulting in the formation of AMP, that is energically less costly than de novo synthesis. This Lactobacillus gasseri (strain ATCC 33323 / DSM 20243 / BCRC 14619 / CIP 102991 / JCM 1131 / KCTC 3163 / NCIMB 11718 / NCTC 13722 / AM63) protein is Adenine phosphoribosyltransferase.